The primary structure comprises 99 residues: UPF0235 protein Cag_0319 (99 aa).

The protein belongs to the UPF0235 family.

This chain is UPF0235 protein Cag_0319, found in Chlorobium chlorochromatii (strain CaD3).